The following is a 383-amino-acid chain: Chitinase-3-like protein 1 (383 aa).

The first 21 residues, 1–21, serve as a signal peptide directing secretion; sequence MGLRVAQTGFVALVLLQSCAA. Residues 22–383 enclose the GH18 domain; it reads YKLVCYYTSW…SAIKDVLAAA (362 aa). Residues C26 and C51 are joined by a disulfide bond. N60 carries N-linked (GlcNAc...) asparagine glycosylation. Residues 70–71, 97–100, Y141, 204–207, and R263 each bind chitin; these read EW, GGWN, and LTYD. C300 and C364 are disulfide-bonded. The important for AKT1 activation and IL8 production stretch occupies residues 324 to 338; it reads QWVGYDDQESVKNKA. W352 serves as a coordination point for chitin.

It belongs to the glycosyl hydrolase 18 family. Monomer. As to expression, detected in smooth muscle cells in atherosclerotic plaques. Detected in regions of vascular occlusion in the aorta.

It localises to the secreted. Its subcellular location is the extracellular space. The protein localises to the cytoplasm. It is found in the perinuclear region. The protein resides in the endoplasmic reticulum. Carbohydrate-binding lectin with a preference for chitin. Has no chitinase activity. May play a role in tissue remodeling and in the capacity of cells to respond to and cope with changes in their environment. Plays a role in T-helper cell type 2 (Th2) inflammatory response and IL-13-induced inflammation, regulating allergen sensitization, inflammatory cell apoptosis, dendritic cell accumulation and M2 macrophage differentiation. Facilitates invasion of pathogenic enteric bacteria into colonic mucosa and lymphoid organs. Mediates activation of AKT1 signaling pathway and subsequent IL8 production in colonic epithelial cells. Regulates antibacterial responses in lung by contributing to macrophage bacterial killing, controlling bacterial dissemination and augmenting host tolerance. Also regulates hyperoxia-induced injury, inflammation and epithelial apoptosis in lung. Stimulates migration and adhesion of cultured vascular smooth muscle cells. This Sus scrofa (Pig) protein is Chitinase-3-like protein 1 (CHI3L1).